Reading from the N-terminus, the 721-residue chain is K(+)-insensitive pyrophosphate-energized proton pump (721 aa).

5 consecutive transmembrane segments (helical) span residues 8 to 28, 57 to 77, 82 to 102, 136 to 156, and 168 to 188; these read LLGV…AVWV, YRTL…AIDM, FGLT…AGYL, VMGL…YLVF, and LVAL…GGGI. Lysine 191 provides a ligand contact to substrate. The Mg(2+) site is built by aspartate 194, aspartate 198, asparagine 221, and aspartate 224. A run of 5 helical transmembrane segments spans residues 247-267, 294-314, 323-343, 374-394, and 416-436; these read AIFL…IILF, ISLA…IGAF, ALAL…IVKI, YGVG…VLGI, and AGIF…GIII. Aspartate 446 is a Mg(2+) binding site. A run of 4 helical transmembrane segments spans residues 483–503, 527–547, 599–619, and 621–641; these read AIAS…FEIV, LINA…YFFS, FLIP…LLGW, and ALAG…LLMA. Residues aspartate 648, aspartate 672, and aspartate 676 each contribute to the Ca(2+) site. Lysine 679 is a substrate binding site. A helical membrane pass occupies residues 698–718; it reads VVFTYVIVSTNIALGIWPSGL.

This sequence belongs to the H(+)-translocating pyrophosphatase (TC 3.A.10) family. K(+)-insensitive subfamily. Homodimer. Mg(2+) is required as a cofactor.

It localises to the cell membrane. The catalysed reaction is diphosphate + H2O + H(+)(in) = 2 phosphate + 2 H(+)(out). Functionally, proton pump that utilizes the energy of pyrophosphate hydrolysis as the driving force for proton movement across the membrane. Generates a proton motive force. This is K(+)-insensitive pyrophosphate-energized proton pump from Pyrobaculum aerophilum (strain ATCC 51768 / DSM 7523 / JCM 9630 / CIP 104966 / NBRC 100827 / IM2).